Consider the following 517-residue polypeptide: Putative thymidine phosphorylase (517 aa).

It belongs to the thymidine/pyrimidine-nucleoside phosphorylase family. Type 2 subfamily.

It catalyses the reaction thymidine + phosphate = 2-deoxy-alpha-D-ribose 1-phosphate + thymine. This Legionella pneumophila (strain Corby) protein is Putative thymidine phosphorylase.